A 468-amino-acid chain; its full sequence is MSTRETFKISLLAKMPKDVINQFLSKDKTPFSVLFLSLLVGILAGLVGTYFEQAVHLVSETRTDWLKSEIGSFLPLWLAAFLISAFLAFIGYFLVHRFAPEAAGSGIPEIEGAMDGMRPVRWWRVLPVKFFGGMGALGSGMVLGREGPTVQMGGAVGRMISDIFRVKNEDTRHSLLAAGAAGGLAAAFNAPLAGIMFVIEEMRPQFRYTLISVRAVIISAVAANIVFRVINGQDAVITMPQYDAPELSTLGLFLLLGALFGVFGVLFNYLITLAQDLFVKFHRNDRKRYLLTGSMIGGCFGLLLLYVPELTGGGISLIPTITNGGYGAGILLLLFVGRIFTTLLCFGSGAPGGIFAPMLALGTLFGYAFGLIAKMWFPELNIEPGMFAIAGMGALFAATVRAPITGILLVIEMTNNYHLILPLIITSLGAVIFAQLLGGQPIYSQLLHRTLKNQKLQQQDLPPQSPNS.

The Cytoplasmic segment spans residues 1 to 30 (MSTRETFKISLLAKMPKDVINQFLSKDKTP). A helical transmembrane segment spans residues 31 to 67 (FSVLFLSLLVGILAGLVGTYFEQAVHLVSETRTDWLK). The Periplasmic portion of the chain corresponds to 68–74 (SEIGSFL). Residues 75-98 (PLWLAAFLISAFLAFIGYFLVHRF) form a helical membrane-spanning segment. A Selectivity filter part_1 motif is present at residues 104–108 (GSGIP). Ser105 is a binding site for chloride. The segment at residues 107–114 (IPEIEGAM) is an intramembrane region (helical). Topologically, residues 115 to 121 (DGMRPVR) are cytoplasmic. The next 2 helical transmembrane spans lie at 122–139 (WWRV…ALGS) and 146–164 (EGPT…SDIF). The Selectivity filter part_2 signature appears at 144–148 (GREGP). Topologically, residues 165–174 (RVKNEDTRHS) are cytoplasmic. 2 intramembrane regions (helical) span residues 175–187 (LLAA…LAAA) and 191–199 (PLAGIMFVI). Over 200-212 (EEMRPQFRYTLIS) the chain is Cytoplasmic. A helical membrane pass occupies residues 213 to 230 (VRAVIISAVAANIVFRVI). The Periplasmic segment spans residues 231–250 (NGQDAVITMPQYDAPELSTL). The chain crosses the membrane as a helical span at residues 251-279 (GLFLLLGALFGVFGVLFNYLITLAQDLFV). Residues 280-285 (KFHRND) lie on the Cytoplasmic side of the membrane. A helical transmembrane segment spans residues 286–307 (RKRYLLTGSMIGGCFGLLLLYV). The Periplasmic segment spans residues 308–327 (PELTGGGISLIPTITNGGYG). A run of 2 helical transmembrane segments spans residues 328–347 (AGIL…LCFG) and 353–374 (GIFA…LIAK). The Selectivity filter part_3 motif lies at 353–357 (GIFAP). Residues Ile354 and Phe355 each coordinate chloride. The Periplasmic segment spans residues 375-384 (MWFPELNIEP). An intramembrane region (helical) is located at residues 385 to 399 (GMFAIAGMGALFAAT). The segment at residues 400 to 402 (VRA) is an intramembrane region (note=Loop between two helices). The helical intramembrane region spans 403 to 414 (PITGILLVIEMT). The segment at residues 415–419 (NNYHL) is an intramembrane region (note=Loop between two helices). Residues 420–436 (ILPLIITSLGAVIFAQL) form a helical membrane-spanning segment. The Cytoplasmic segment spans residues 437–468 (LGGQPIYSQLLHRTLKNQKLQQQDLPPQSPNS). Residue Tyr443 coordinates chloride.

Belongs to the chloride channel (TC 2.A.49) family. ClcA subfamily. As to quaternary structure, homodimer.

The protein localises to the cell inner membrane. The enzyme catalyses 2 chloride(in) + H(+)(out) = 2 chloride(out) + H(+)(in). Proton-coupled chloride transporter. Functions as antiport system and exchanges two chloride ions for 1 proton. Probably acts as an electrical shunt for an outwardly-directed proton pump that is linked to amino acid decarboxylation, as part of the extreme acid resistance (XAR) response. The polypeptide is H(+)/Cl(-) exchange transporter ClcA (Vibrio cholerae serotype O1 (strain ATCC 39315 / El Tor Inaba N16961)).